Reading from the N-terminus, the 612-residue chain is MNHFPKLLSSQIGFDLAQTMLEGFDRHYRIFRDAAIHAKTLFEKGDWHGLQKLARDRITSYDERVDECVELLEDEYDAEKIDSEVWQQIKLHYIGLLTTHRQPECAETFFNSVCCKILHRSYFNNDFIFVRPAISTEYIENDEPAAKPTYRAYYPGKDGLAATLERIVTNFQLEPQFEDLTRDVGCVMQAIHDAFGAFDEAPNFQIHVLSSLFYRNKSAYIVGRIINGDLLLPFAVPLRHVKPGVLALDTVLLKREQLLIIFSFSHSYFLVDMEVPSAYVEFLGTIMPGKPKAEIYTSVGLQKQGKNLFYRDLLHHLSHSSDQFIIAPGIKGLVMLVFTLPSFPYVFKLIKDNFPPPKETTRAQIQSKYQLVKRHDRLGRMADTLEYSSVALPRSRLDDALVRELEKEVPSLLEYEGENLVIRHMYIERRMVPLNLFLQNGNDEDVEHGIKEYGNAVKELMQANIFPGDMLYKNFGVTRHGRVVFYDYDEIEYLTDCNVRAVPAPRNEEDEMSGEPWYSVGPHDIFPETYGTFLLGDPRVRRSFMQHHADFFDPALWQRHKDHLLKGELPDFFPYDDSARFCNCYPERFADAAGRASPEPDAPADARSVRVA.

ATP is bound by residues A327–L333 and K348. D383 is a catalytic residue. The interval A593–A612 is disordered.

Belongs to the AceK family.

The protein resides in the cytoplasm. It catalyses the reaction L-seryl-[isocitrate dehydrogenase] + ATP = O-phospho-L-seryl-[isocitrate dehydrogenase] + ADP + H(+). In terms of biological role, bifunctional enzyme which can phosphorylate or dephosphorylate isocitrate dehydrogenase (IDH) on a specific serine residue. This is a regulatory mechanism which enables bacteria to bypass the Krebs cycle via the glyoxylate shunt in response to the source of carbon. When bacteria are grown on glucose, IDH is fully active and unphosphorylated, but when grown on acetate or ethanol, the activity of IDH declines drastically concomitant with its phosphorylation. The polypeptide is Isocitrate dehydrogenase kinase/phosphatase (Paraburkholderia phytofirmans (strain DSM 17436 / LMG 22146 / PsJN) (Burkholderia phytofirmans)).